The following is a 247-amino-acid chain: 2-amino-5-formylamino-6-ribosylaminopyrimidin-4(3H)-one 5'-monophosphate deformylase (247 aa).

Residues glutamate 41, histidine 43, aspartate 52, and histidine 121 each coordinate Fe cation.

It belongs to the creatininase superfamily. FAPy deformylase family. In terms of assembly, homodimer. It depends on Fe(2+) as a cofactor. Requires Zn(2+) as cofactor.

It catalyses the reaction 2-amino-5-formylamino-6-(5-phospho-D-ribosylamino)pyrimidin-4(3H)-one + H2O = 2,5-diamino-6-(1-D-ribosylamino)pyrimidin-4(3H)-one 5'-phosphate + formate + H(+). Its pathway is cofactor biosynthesis; coenzyme F420 biosynthesis. It functions in the pathway cofactor biosynthesis; riboflavin biosynthesis. Catalyzes the hydrolysis of the formamide of 2-amino-5-formylamino-6-ribosylamino-4(3H)-pyrimidinone 5'-monophosphate (FAPy) to form 2,5-diamino-6-ribosylamino-4(3H)-pyrimidinone 5'-phosphate (APy). The polypeptide is 2-amino-5-formylamino-6-ribosylaminopyrimidin-4(3H)-one 5'-monophosphate deformylase (Methanothermus fervidus (strain ATCC 43054 / DSM 2088 / JCM 10308 / V24 S)).